Consider the following 476-residue polypeptide: Cytosolic iron-sulfur assembly component 3 (476 aa).

The residue at position 2 (Ala-2) is an N-acetylalanine. The [4Fe-4S] cluster site is built by Cys-24, Cys-71, Cys-74, Cys-77, Cys-190, Cys-246, Cys-395, and Cys-399.

The protein belongs to the NARF family. In terms of assembly, external component of the CIA complex. In the CIA complex, interacts directly with CIAO1 and MMS19.

Component of the cytosolic iron-sulfur protein assembly (CIA) complex, a multiprotein complex that mediates the incorporation of iron-sulfur cluster into extramitochondrial Fe/S proteins. Seems to negatively regulate the level of HIF1A expression, although this effect could be indirect. This chain is Cytosolic iron-sulfur assembly component 3, found in Rattus norvegicus (Rat).